A 443-amino-acid polypeptide reads, in one-letter code: COP9 signalosome complex subunit 2 (443 aa).

Residues 254-416 (AHTDFFEAFK…QLLELDHQKR (163 aa)) form the PCI domain.

Belongs to the CSN2 family. Component of the CSN complex, probably composed of cops1, cops2, cops3, cops4, cops5, cops6, cops7, cops8 and cops9.

Its subcellular location is the cytoplasm. The protein resides in the nucleus. Essential component of the COP9 signalosome complex (CSN), a complex involved in various cellular and developmental processes. The CSN complex is an essential regulator of the ubiquitin (Ubl) conjugation pathway by mediating the deneddylation of the cullin subunits of E3 ligase complexes, leading to modify the Ubl ligase activity. This is COP9 signalosome complex subunit 2 (cops2) from Danio rerio (Zebrafish).